Reading from the N-terminus, the 212-residue chain is Thymidylate kinase (212 aa).

10–17 (GPEGAGKT) lines the ATP pocket.

It belongs to the thymidylate kinase family.

It catalyses the reaction dTMP + ATP = dTDP + ADP. In terms of biological role, phosphorylation of dTMP to form dTDP in both de novo and salvage pathways of dTTP synthesis. This is Thymidylate kinase from Bacillus licheniformis (strain ATCC 14580 / DSM 13 / JCM 2505 / CCUG 7422 / NBRC 12200 / NCIMB 9375 / NCTC 10341 / NRRL NRS-1264 / Gibson 46).